The sequence spans 444 residues: Proline--tRNA ligase (444 aa).

It belongs to the class-II aminoacyl-tRNA synthetase family. ProS type 2 subfamily. Homodimer.

It is found in the cytoplasm. It catalyses the reaction tRNA(Pro) + L-proline + ATP = L-prolyl-tRNA(Pro) + AMP + diphosphate. In terms of biological role, catalyzes the attachment of proline to tRNA(Pro) in a two-step reaction: proline is first activated by ATP to form Pro-AMP and then transferred to the acceptor end of tRNA(Pro). The polypeptide is Proline--tRNA ligase (Maricaulis maris (strain MCS10) (Caulobacter maris)).